The primary structure comprises 189 residues: Putative manganese efflux pump MntP (189 aa).

Helical transmembrane passes span 3–23 (PISL…AALG), 41–61 (LIFG…GQVA), 69–89 (DHWI…YNGI), 105–125 (FWIL…VGVG), 133–153 (IVIA…IGVM), and 168–188 (IVGG…HLSA).

This sequence belongs to the MntP (TC 9.B.29) family.

The protein localises to the cell inner membrane. Its function is as follows. Probably functions as a manganese efflux pump. The sequence is that of Putative manganese efflux pump MntP from Pseudomonas savastanoi pv. phaseolicola (strain 1448A / Race 6) (Pseudomonas syringae pv. phaseolicola (strain 1448A / Race 6)).